Reading from the N-terminus, the 62-residue chain is Large ribosomal subunit protein bL28 (62 aa).

It belongs to the bacterial ribosomal protein bL28 family.

This chain is Large ribosomal subunit protein bL28, found in Thermobifida fusca (strain YX).